A 431-amino-acid polypeptide reads, in one-letter code: NADH-quinone oxidoreductase subunit F (431 aa).

Position 54–63 (54–63 (GRGGAGFPTG)) interacts with NAD(+). 167-214 (GAGAYICGEETALLESLEGKKGMPRMKPPFPAGSGLYGCPTTVNNVES) is an FMN binding site. Positions 346, 349, 352, and 392 each coordinate [4Fe-4S] cluster.

Belongs to the complex I 51 kDa subunit family. FMN serves as cofactor. Requires [4Fe-4S] cluster as cofactor.

It catalyses the reaction a quinone + NADH + 5 H(+)(in) = a quinol + NAD(+) + 4 H(+)(out). In terms of biological role, NDH-1 shuttles electrons from NADH, via FMN and iron-sulfur (Fe-S) centers, to quinones in the respiratory chain. The immediate electron acceptor for the enzyme in this species is believed to be ubiquinone. Couples the redox reaction to proton translocation (for every two electrons transferred, four hydrogen ions are translocated across the cytoplasmic membrane), and thus conserves the redox energy in a proton gradient. In Rhodobacter capsulatus (Rhodopseudomonas capsulata), this protein is NADH-quinone oxidoreductase subunit F (nuoF).